Reading from the N-terminus, the 164-residue chain is Crossover junction endodeoxyribonuclease RuvC (164 aa).

Active-site residues include D7, E67, and D140. Mg(2+) contacts are provided by D7, E67, and D140.

Belongs to the RuvC family. Homodimer which binds Holliday junction (HJ) DNA. The HJ becomes 2-fold symmetrical on binding to RuvC with unstacked arms; it has a different conformation from HJ DNA in complex with RuvA. In the full resolvosome a probable DNA-RuvA(4)-RuvB(12)-RuvC(2) complex forms which resolves the HJ. Mg(2+) is required as a cofactor.

The protein resides in the cytoplasm. It carries out the reaction Endonucleolytic cleavage at a junction such as a reciprocal single-stranded crossover between two homologous DNA duplexes (Holliday junction).. In terms of biological role, the RuvA-RuvB-RuvC complex processes Holliday junction (HJ) DNA during genetic recombination and DNA repair. Endonuclease that resolves HJ intermediates. Cleaves cruciform DNA by making single-stranded nicks across the HJ at symmetrical positions within the homologous arms, yielding a 5'-phosphate and a 3'-hydroxyl group; requires a central core of homology in the junction. The consensus cleavage sequence is 5'-(A/T)TT(C/G)-3'. Cleavage occurs on the 3'-side of the TT dinucleotide at the point of strand exchange. HJ branch migration catalyzed by RuvA-RuvB allows RuvC to scan DNA until it finds its consensus sequence, where it cleaves and resolves the cruciform DNA. The polypeptide is Crossover junction endodeoxyribonuclease RuvC (Chloroflexus aurantiacus (strain ATCC 29364 / DSM 637 / Y-400-fl)).